A 721-amino-acid chain; its full sequence is Polyribonucleotide nucleotidyltransferase (721 aa).

Positions 495 and 501 each coordinate Mg(2+). The 60-residue stretch at 562-621 folds into the KH domain; it reads PRLLSFRIDPELIGTVIGPGGRTIKGITERTNTKIDIEDSGIVTIASHDGAAAEEAQKII. An S1 motif domain is found at 631-699; it reads GEMFSGSITR…NRGRINLTLR (69 aa). The interval 700–721 is disordered; the sequence is GVPQSGESTEVEPQPTPVAPLS.

The protein belongs to the polyribonucleotide nucleotidyltransferase family. Mg(2+) is required as a cofactor.

The protein localises to the cytoplasm. It carries out the reaction RNA(n+1) + phosphate = RNA(n) + a ribonucleoside 5'-diphosphate. Its function is as follows. Involved in mRNA degradation. Catalyzes the phosphorolysis of single-stranded polyribonucleotides processively in the 3'- to 5'-direction. The sequence is that of Polyribonucleotide nucleotidyltransferase from Synechococcus sp. (strain CC9902).